Here is a 546-residue protein sequence, read N- to C-terminus: Cytochrome P450 monooxygenase gloP (546 aa).

Residues 17–37 (TLSGGILTFLFIVVIAHFVLT) traverse the membrane as a helical segment. N-linked (GlcNAc...) asparagine glycosylation is found at asparagine 189, asparagine 413, and asparagine 416. Cysteine 492 provides a ligand contact to heme.

This sequence belongs to the cytochrome P450 family. It depends on heme as a cofactor.

Its subcellular location is the membrane. It functions in the pathway mycotoxin biosynthesis. In terms of biological role, cytochrome P450 monooxygenase; part of the gene cluster that mediates the biosynthesis of pneumocandins, lipohexapeptides of the echinocandin family that prevent fungal cell wall formation by non-competitive inhibition of beta-1,3-glucan synthase. The 10,12-dimethylmyristoyl side chain is synthesized by the reducing polyketide synthase gloL/GLPKS4. The thioesterase gloN/GLHYD exclusively interacts with gloL/GLPKS4 to maintain turnover of the polyketide side chain. The 10R,12S-dimethylmyristic acid is then transferred to the first thiolation domain of the nonribosomal peptide synthetase gloA/GLNRPS4 by the acyl-AMP ligase gloD/GLligase, followed by its acylation to L-ornithine to trigger elongation of the cyclic hexapeptide. L-ornithine, 4R-hydroxyl-L-proline (generated from L-proline by the dioxygenase gloF/GLOXY2), 3S-hydroxyl-L-homotyrosine (generated by gloG/GLHtyB, gloH/GLHtyA, gloI/GLHtyC, gloJ/GLHtyD and hydroxylated at C-3 by the dioxygenase gloM/GLOXY1), 3R-hydroxyl-L-glutamine (generated from L-glutamine probably by the dioxygenase gloE/GLOXY3) and 3S-hydroxyl-L-proline (generated from L-proline by the dioxygenase gloF/GLOXY2 to yield pneumocandin B0), or 3S-hydroxyl-4S-methyl-L-proline (generated from L-leucine by the dioxygenase gloC/GLOXY4 to yield pneumocandin A0) are sequentially added to the growing chain. The last C domain of gloA/GLNRPS4 is proposed to be responsible for cyclization by condensation to form the peptide bond between L-ornithine and 3S-hydroxyl-4S-methyl-L-proline (for pneumocandin A0) or 3S-hydroxyl-L-proline (for pneumocandin B0). Finally, the subsequent C-4 hydroxylation of 3S-hydroxyl-L-homotyrosine and L-ornithine dihydroxylation at C-4 and C-5 are performed by the cytochrome P450 monooxygenases gloP/GLP450-1 and gloO/GLP450-2, respectively. In Glarea lozoyensis (strain ATCC 20868 / MF5171), this protein is Cytochrome P450 monooxygenase gloP.